The primary structure comprises 365 residues: Phosphatidylcholine:ceramide cholinephosphotransferase 2 (365 aa).

The segment covering 1–14 has biased composition (basic and acidic residues); it reads MDIIETAKLEEHLE. The disordered stretch occupies residues 1-52; it reads MDIIETAKLEEHLENQPSDPTNTYTRPTEPVEEENKNGNGKPKSLSSGLRKG. The segment covering 15–26 has biased composition (polar residues); the sequence is NQPSDPTNTYTR. The next 5 helical transmembrane spans lie at 80 to 100, 128 to 148, 159 to 179, 218 to 240, and 248 to 268; these read GIAF…ITVV, FSVS…QWLF, FCFI…VTTL, HILC…YLFI, and FWWY…CILV. Histidine 229 is an active-site residue. Catalysis depends on residues histidine 272 and aspartate 276. The helical transmembrane segment at 273–290 threads the bilayer; sequence YTVDVIIAYYITTRLFWW. The Cytoplasmic portion of the chain corresponds to 291–365; it reads YHSMANEKNL…KIGEDNEKST (75 aa). 4 S-palmitoyl cysteine lipidation sites follow: cysteine 331, cysteine 332, cysteine 343, and cysteine 348.

It belongs to the sphingomyelin synthase family. Post-translationally, palmitoylated on Cys-331, Cys-332, Cys-343 and Cys-348; which plays an important role in plasma membrane localization.

The protein resides in the cell membrane. The protein localises to the golgi apparatus membrane. It carries out the reaction an N-acylsphing-4-enine + a 1,2-diacyl-sn-glycero-3-phosphocholine = a sphingomyelin + a 1,2-diacyl-sn-glycerol. The catalysed reaction is an N-acylsphinganine + a 1,2-diacyl-sn-glycero-3-phosphocholine = an N-acylsphinganine-1-phosphocholine + a 1,2-diacyl-sn-glycerol. It catalyses the reaction an N-acyl-(4R)-4-hydroxysphinganine + a 1,2-diacyl-sn-glycero-3-phosphocholine = an N-acyl-(4R)-4-hydroxysphinganine-phosphocholine + a 1,2-diacyl-sn-glycerol. The enzyme catalyses an N-acylsphing-4-enine + a 1,2-diacyl-sn-glycero-3-phosphoethanolamine = an N-acylsphing-4-enine 1-phosphoethanolamine + a 1,2-diacyl-sn-glycerol. It carries out the reaction an N-acylsphinganine + a 1,2-diacyl-sn-glycero-3-phosphoethanolamine = an N-acylsphinganine-1-phosphoethanolamine + a 1,2-diacyl-sn-glycerol. The catalysed reaction is an N-acyl-(4R)-4-hydroxysphinganine + a 1,2-diacyl-sn-glycero-3-phosphoethanolamine = an N-acyl-(4R)-4-hydroxysphinganine-1-phosphoethanolamine + a 1,2-diacyl-sn-glycerol. It catalyses the reaction 1,2-dihexadecanoyl-sn-glycero-3-phosphocholine + an N-acylsphing-4-enine = 1,2-dihexadecanoyl-sn-glycerol + a sphingomyelin. The enzyme catalyses 1-(9Z-octadecenoyl)-2-acyl-sn-3-glycerol + a sphingomyelin = a 1-(9Z-octadecenoyl)-2-acyl-sn-glycero-3-phosphocholine + an N-acylsphing-4-enine. It carries out the reaction N-hexadecanoylsphinganine + a 1,2-diacyl-sn-glycero-3-phosphocholine = N-hexadecanoyl-sphinganine-1-phosphocholine + a 1,2-diacyl-sn-glycerol. The catalysed reaction is N-hexadecanoyl-(4R)-hydroxysphinganine + a 1,2-diacyl-sn-glycero-3-phosphocholine = N-hexadecanoyl-(4R)-hydroxysphinganine-phosphocholine + a 1,2-diacyl-sn-glycerol. It catalyses the reaction N-hexadecanoylsphinganine + a 1,2-diacyl-sn-glycero-3-phosphoethanolamine = N-hexadecanoyl-sphinganine-1-phosphoethanolamine + a 1,2-diacyl-sn-glycerol. The enzyme catalyses N-hexadecanoyl-(4R)-hydroxysphinganine + a 1,2-diacyl-sn-glycero-3-phosphoethanolamine = N-hexadecanoyl-(4R)-hydroxysphinganine-1-phosphoethanolamine + a 1,2-diacyl-sn-glycerol. It participates in sphingolipid metabolism. Sphingomyelin synthase that primarily contributes to sphingomyelin synthesis and homeostasis at the plasma membrane. Catalyzes the reversible transfer of phosphocholine moiety in sphingomyelin biosynthesis: in the forward reaction transfers phosphocholine head group of phosphatidylcholine (PC) on to ceramide (CER) to form ceramide phosphocholine (sphingomyelin, SM) and diacylglycerol (DAG) as by-product, and in the reverse reaction transfers phosphocholine from SM to DAG to form PC and CER. The direction of the reaction appears to depend on the levels of CER and DAG in the plasma membrane. Does not use free phosphorylcholine or CDP-choline as donors. Can also transfer phosphoethanolamine head group of phosphatidylethanolamine (PE) on to ceramide (CER) to form ceramide phosphoethanolamine (CPE). Regulates receptor-mediated signal transduction via mitogenic DAG and proapoptotic CER, as well as via SM, a structural component of membrane rafts that serve as platforms for signal transduction and protein sorting. To a lesser extent, plays a role in secretory transport via regulation of DAG pool at the Golgi apparatus and its downstream effects on PRKD1. Required for normal bone matrix mineralization. The sequence is that of Phosphatidylcholine:ceramide cholinephosphotransferase 2 (SGMS2) from Macaca fascicularis (Crab-eating macaque).